The sequence spans 190 residues: uncharacterized protein (190 aa).

A signal peptide spans 1–15; sequence MKVFAYIALATVVAG.

It localises to the secreted. This is an uncharacterized protein from Arthroderma benhamiae (strain ATCC MYA-4681 / CBS 112371) (Trichophyton mentagrophytes).